A 65-amino-acid polypeptide reads, in one-letter code: Defensin-B3 (65 aa).

Residues methionine 1 to serine 21 form the signal peptide. Intrachain disulfides connect cysteine 29-cysteine 58, cysteine 36-cysteine 50, and cysteine 40-cysteine 59. Residues glutamate 62–arginine 65 constitute a propeptide that is removed on maturation.

The protein belongs to the beta-defensin family. In terms of tissue distribution, lowly expressed in spleen, and expressed at lower levels in kidney, lung and testis.

The protein resides in the secreted. In terms of biological role, has antimicrobial activity. This Ornithorhynchus anatinus (Duckbill platypus) protein is Defensin-B3.